The following is a 145-amino-acid chain: MIALIQRVSRASVVVDNQTIGAIDKGLLVLLGVEREDNREKMEKLATKVMSYRVFSDENGKMNLNLTQAGGSLLVVSQFTLAADTGRGLRPSFSGAGTPEQALGLYEDFVAFCRAQGVTTETGQFGADMKVELINDGPVTFNLQV.

Positions 137–138 match the Gly-cisPro motif, important for rejection of L-amino acids motif; sequence GP.

This sequence belongs to the DTD family. As to quaternary structure, homodimer.

It localises to the cytoplasm. It catalyses the reaction glycyl-tRNA(Ala) + H2O = tRNA(Ala) + glycine + H(+). It carries out the reaction a D-aminoacyl-tRNA + H2O = a tRNA + a D-alpha-amino acid + H(+). Its function is as follows. An aminoacyl-tRNA editing enzyme that deacylates mischarged D-aminoacyl-tRNAs. Also deacylates mischarged glycyl-tRNA(Ala), protecting cells against glycine mischarging by AlaRS. Acts via tRNA-based rather than protein-based catalysis; rejects L-amino acids rather than detecting D-amino acids in the active site. By recycling D-aminoacyl-tRNA to D-amino acids and free tRNA molecules, this enzyme counteracts the toxicity associated with the formation of D-aminoacyl-tRNA entities in vivo and helps enforce protein L-homochirality. The sequence is that of D-aminoacyl-tRNA deacylase from Shewanella sp. (strain ANA-3).